Here is a 779-residue protein sequence, read N- to C-terminus: Phosphoribosylformylglycinamidine synthase subunit PurL (779 aa).

Residue His-52 is part of the active site. Positions 55 and 94 each coordinate ATP. Glu-96 contacts Mg(2+). Substrate is bound by residues 97–100 (SHNH) and Arg-119. The active-site Proton acceptor is the His-98. Asp-120 contacts Mg(2+). Substrate is bound at residue Gln-243. Asp-271 serves as a coordination point for Mg(2+). A substrate-binding site is contributed by 315–317 (ESQ). ATP contacts are provided by Asn-523 and Gly-560. Asn-561 provides a ligand contact to Mg(2+). Substrate is bound at residue Ser-563.

It belongs to the FGAMS family. In terms of assembly, monomer. Part of the FGAM synthase complex composed of 1 PurL, 1 PurQ and 2 PurS subunits.

The protein resides in the cytoplasm. It catalyses the reaction N(2)-formyl-N(1)-(5-phospho-beta-D-ribosyl)glycinamide + L-glutamine + ATP + H2O = 2-formamido-N(1)-(5-O-phospho-beta-D-ribosyl)acetamidine + L-glutamate + ADP + phosphate + H(+). The protein operates within purine metabolism; IMP biosynthesis via de novo pathway; 5-amino-1-(5-phospho-D-ribosyl)imidazole from N(2)-formyl-N(1)-(5-phospho-D-ribosyl)glycinamide: step 1/2. Part of the phosphoribosylformylglycinamidine synthase complex involved in the purines biosynthetic pathway. Catalyzes the ATP-dependent conversion of formylglycinamide ribonucleotide (FGAR) and glutamine to yield formylglycinamidine ribonucleotide (FGAM) and glutamate. The FGAM synthase complex is composed of three subunits. PurQ produces an ammonia molecule by converting glutamine to glutamate. PurL transfers the ammonia molecule to FGAR to form FGAM in an ATP-dependent manner. PurS interacts with PurQ and PurL and is thought to assist in the transfer of the ammonia molecule from PurQ to PurL. This chain is Phosphoribosylformylglycinamidine synthase subunit PurL, found in Prochlorococcus marinus (strain MIT 9312).